A 28-amino-acid chain; its full sequence is MRVNKESLQMNTYISLHGWWRTSLLRAV.

Functionally, this protein is involved in control of the biosynthesis of tryptophan. This Serratia marcescens protein is trp operon leader peptide (trpL).